A 221-amino-acid chain; its full sequence is Phosphatidylserine decarboxylase proenzyme (221 aa).

Ser-189 functions as the Schiff-base intermediate with substrate; via pyruvic acid in the catalytic mechanism. Ser-189 bears the Pyruvic acid (Ser); by autocatalysis mark.

It belongs to the phosphatidylserine decarboxylase family. PSD-A subfamily. As to quaternary structure, heterodimer of a large membrane-associated beta subunit and a small pyruvoyl-containing alpha subunit. Pyruvate serves as cofactor. Is synthesized initially as an inactive proenzyme. Formation of the active enzyme involves a self-maturation process in which the active site pyruvoyl group is generated from an internal serine residue via an autocatalytic post-translational modification. Two non-identical subunits are generated from the proenzyme in this reaction, and the pyruvate is formed at the N-terminus of the alpha chain, which is derived from the carboxyl end of the proenzyme. The post-translation cleavage follows an unusual pathway, termed non-hydrolytic serinolysis, in which the side chain hydroxyl group of the serine supplies its oxygen atom to form the C-terminus of the beta chain, while the remainder of the serine residue undergoes an oxidative deamination to produce ammonia and the pyruvoyl prosthetic group on the alpha chain.

It localises to the cell membrane. The catalysed reaction is a 1,2-diacyl-sn-glycero-3-phospho-L-serine + H(+) = a 1,2-diacyl-sn-glycero-3-phosphoethanolamine + CO2. It functions in the pathway phospholipid metabolism; phosphatidylethanolamine biosynthesis; phosphatidylethanolamine from CDP-diacylglycerol: step 2/2. Its function is as follows. Catalyzes the formation of phosphatidylethanolamine (PtdEtn) from phosphatidylserine (PtdSer). The polypeptide is Phosphatidylserine decarboxylase proenzyme (Porphyromonas gingivalis (strain ATCC 33277 / DSM 20709 / CIP 103683 / JCM 12257 / NCTC 11834 / 2561)).